Here is a 174-residue protein sequence, read N- to C-terminus: RNA polymerase sigma factor CarQ (174 aa).

The Polymerase core binding motif lies at 39–52; sequence DLLQATFLSVIRSR. Residues 86 to 106 are disordered; the sequence is YASREDTATPASAAPDDSDPS. Residues 136–155 constitute a DNA-binding region (H-T-H motif); that stretch reads FEEIGALRGISPGAARLRAH.

This sequence belongs to the sigma-70 factor family. ECF subfamily.

Its function is as follows. Sigma factors are initiation factors that promote the attachment of RNA polymerase to specific initiation sites and are then released. This sigma factor regulates genes for the light induced biosynthesis of carotenoids. This is RNA polymerase sigma factor CarQ (carQ) from Myxococcus xanthus.